Consider the following 601-residue polypeptide: Elongation factor 4 (601 aa).

Residues 5–187 (EHIRNFSIIA…AIVERLPAPE (183 aa)) enclose the tr-type G domain. GTP contacts are provided by residues 17-22 (DHGKST) and 134-137 (NKVD).

This sequence belongs to the TRAFAC class translation factor GTPase superfamily. Classic translation factor GTPase family. LepA subfamily.

The protein localises to the cell inner membrane. It carries out the reaction GTP + H2O = GDP + phosphate + H(+). In terms of biological role, required for accurate and efficient protein synthesis under certain stress conditions. May act as a fidelity factor of the translation reaction, by catalyzing a one-codon backward translocation of tRNAs on improperly translocated ribosomes. Back-translocation proceeds from a post-translocation (POST) complex to a pre-translocation (PRE) complex, thus giving elongation factor G a second chance to translocate the tRNAs correctly. Binds to ribosomes in a GTP-dependent manner. This Nitratidesulfovibrio vulgaris (strain DSM 19637 / Miyazaki F) (Desulfovibrio vulgaris) protein is Elongation factor 4.